The sequence spans 334 residues: GTPase Obg (334 aa).

Residues 1–159 enclose the Obg domain; sequence MRFVDEVVIK…KEVRLELNLL (159 aa). Residues 160-331 enclose the OBG-type G domain; it reads ADVALLGLPN…LAKKLNEFLQ (172 aa). Residues 166–173, 191–195, 212–215, 282–285, and 312–314 contribute to the GTP site; these read GLPNAGKS, FTTMY, DIPG, NKID, and SAA. Residues Ser-173 and Thr-193 each contribute to the Mg(2+) site.

Belongs to the TRAFAC class OBG-HflX-like GTPase superfamily. OBG GTPase family. As to quaternary structure, monomer. Mg(2+) is required as a cofactor.

The protein resides in the cytoplasm. Its function is as follows. An essential GTPase which binds GTP, GDP and possibly (p)ppGpp with moderate affinity, with high nucleotide exchange rates and a fairly low GTP hydrolysis rate. Plays a role in control of the cell cycle, stress response, ribosome biogenesis and in those bacteria that undergo differentiation, in morphogenesis control. This is GTPase Obg from Francisella tularensis subsp. mediasiatica (strain FSC147).